The following is a 20-amino-acid chain: M-poneritoxin-Ng1f (20 aa).

K20 carries the post-translational modification Lysine amide.

As to expression, expressed by the venom gland.

The protein resides in the secreted. The protein localises to the target cell membrane. Functionally, has activity against Gram-positive bacteria. Has insecticidal and hemolytic activities. May act by disrupting the integrity of the bacterial cell membrane. The protein is M-poneritoxin-Ng1f of Neoponera goeldii (Ponerine ant).